The following is a 482-amino-acid chain: D-inositol 3-phosphate glycosyltransferase (482 aa).

Residue histidine 63 coordinates 1D-myo-inositol 3-phosphate. UDP-N-acetyl-alpha-D-glucosamine is bound by residues 69–70 (QP) and glycine 77. Residues 74–79 (DAGGMN), lysine 132, tyrosine 165, threonine 189, and arginine 209 contribute to the 1D-myo-inositol 3-phosphate site. Residues arginine 289, lysine 294, and glutamine 355 each contribute to the UDP-N-acetyl-alpha-D-glucosamine site. The Mg(2+) site is built by tyrosine 364, arginine 365, and alanine 367. Positions 377 and 385 each coordinate UDP-N-acetyl-alpha-D-glucosamine. Threonine 391 contacts Mg(2+).

It belongs to the glycosyltransferase group 1 family. MshA subfamily. Homodimer.

The enzyme catalyses 1D-myo-inositol 3-phosphate + UDP-N-acetyl-alpha-D-glucosamine = 1D-myo-inositol 2-acetamido-2-deoxy-alpha-D-glucopyranoside 3-phosphate + UDP + H(+). In terms of biological role, catalyzes the transfer of a N-acetyl-glucosamine moiety to 1D-myo-inositol 3-phosphate to produce 1D-myo-inositol 2-acetamido-2-deoxy-glucopyranoside 3-phosphate in the mycothiol biosynthesis pathway. This chain is D-inositol 3-phosphate glycosyltransferase, found in Salinispora tropica (strain ATCC BAA-916 / DSM 44818 / JCM 13857 / NBRC 105044 / CNB-440).